The following is a 247-amino-acid chain: Lipoprotein-releasing system ATP-binding protein LolD 2 (247 aa).

An ABC transporter domain is found at leucine 19–glycine 247. Glycine 56–threonine 63 contributes to the ATP binding site.

The protein belongs to the ABC transporter superfamily. Lipoprotein translocase (TC 3.A.1.125) family. As to quaternary structure, the complex is composed of two ATP-binding proteins (LolD) and two transmembrane proteins (LolC and LolE).

The protein resides in the cell inner membrane. Part of the ABC transporter complex LolCDE involved in the translocation of mature outer membrane-directed lipoproteins, from the inner membrane to the periplasmic chaperone, LolA. Responsible for the formation of the LolA-lipoprotein complex in an ATP-dependent manner. This is Lipoprotein-releasing system ATP-binding protein LolD 2 from Chlorobaculum tepidum (strain ATCC 49652 / DSM 12025 / NBRC 103806 / TLS) (Chlorobium tepidum).